The chain runs to 340 residues: Glycerol-3-phosphate dehydrogenase [NAD(P)+] (340 aa).

4 residues coordinate NADPH: S14, F15, R35, and K108. The sn-glycerol 3-phosphate site is built by K108 and G136. A140 is an NADPH binding site. The sn-glycerol 3-phosphate site is built by K191, D244, S254, R255, and N256. K191 (proton acceptor) is an active-site residue. R255 lines the NADPH pocket. 2 residues coordinate NADPH: V279 and E281.

It belongs to the NAD-dependent glycerol-3-phosphate dehydrogenase family.

It is found in the cytoplasm. It carries out the reaction sn-glycerol 3-phosphate + NAD(+) = dihydroxyacetone phosphate + NADH + H(+). The catalysed reaction is sn-glycerol 3-phosphate + NADP(+) = dihydroxyacetone phosphate + NADPH + H(+). It functions in the pathway membrane lipid metabolism; glycerophospholipid metabolism. In terms of biological role, catalyzes the reduction of the glycolytic intermediate dihydroxyacetone phosphate (DHAP) to sn-glycerol 3-phosphate (G3P), the key precursor for phospholipid synthesis. This is Glycerol-3-phosphate dehydrogenase [NAD(P)+] from Azotobacter vinelandii (strain DJ / ATCC BAA-1303).